Here is a 261-residue protein sequence, read N- to C-terminus: 5'-nucleotidase SurE (261 aa).

Residues Asp8, Asp9, Ser39, and Asn94 each contribute to the a divalent metal cation site.

Belongs to the SurE nucleotidase family. Requires a divalent metal cation as cofactor.

It localises to the cytoplasm. It catalyses the reaction a ribonucleoside 5'-phosphate + H2O = a ribonucleoside + phosphate. Its function is as follows. Nucleotidase that shows phosphatase activity on nucleoside 5'-monophosphates. This is 5'-nucleotidase SurE from Methanopyrus kandleri (strain AV19 / DSM 6324 / JCM 9639 / NBRC 100938).